Reading from the N-terminus, the 1306-residue chain is Contactin-associated protein-like 5 (1306 aa).

Positions 1–24 (MDSLPRLTSVLTLLFSGLWHLGLT) are cleaved as a signal peptide. Topologically, residues 25 to 1237 (ATNYNCDDPL…PLTNAVRSDS (1213 aa)) are extracellular. The F5/8 type C domain occupies 30–174 (CDDPLASLLS…IGMRVEVYGC (145 aa)). A disulfide bridge links cysteine 30 with cysteine 174. Laminin G-like domains lie at 180-360 (VADF…TFSC) and 367-544 (PITF…IDLC). 3 N-linked (GlcNAc...) asparagine glycosylation sites follow: asparagine 282, asparagine 355, and asparagine 496. Residues cysteine 329 and cysteine 360 are joined by a disulfide bond. Cystine bridges form between cysteine 512–cysteine 544, cysteine 550–cysteine 561, and cysteine 555–cysteine 570. The EGF-like 1 domain maps to 546 to 583 (IKDRCLPNYCEHGGSCSQSWTTFYCNCSDTSYTGATCH). An N-linked (GlcNAc...) asparagine glycan is attached at asparagine 571. A disulfide bridge links cysteine 572 with cysteine 582. The Fibrinogen C-terminal domain occupies 584 to 790 (NSIYEQSCEV…LRCYGDRRFW (207 aa)). A glycan (N-linked (GlcNAc...) asparagine) is linked at asparagine 622. The region spanning 791–956 (NAVSFYTEAS…KVTSGVRPGC (166 aa)) is the Laminin G-like 3 domain. Disulfide bonds link cysteine 929/cysteine 956, cysteine 960/cysteine 973, cysteine 967/cysteine 982, cysteine 984/cysteine 994, and cysteine 1164/cysteine 1199. An EGF-like 2 domain is found at 957–995 (PGHCSSYGSICHNGGKCVEKHNGYLCDCTNSPYEGPFCK). The region spanning 1013-1199 (QEPYPVTKNI…VHGTLTESSC (187 aa)) is the Laminin G-like 4 domain. A helical transmembrane segment spans residues 1238-1258 (AVIGGVIAVVIFIIFCIIGIM). At 1259 to 1306 (TRFLYQHKQSHRTSQMKEKEYPENLDSSFRNEIDLQNTVSECKREYFI) the chain is on the cytoplasmic side.

The protein belongs to the neurexin family.

Its subcellular location is the membrane. May play a role in the correct development and proper functioning of the peripheral and central nervous system and be involved in cell adhesion and intercellular communication. This chain is Contactin-associated protein-like 5 (CNTNAP5), found in Homo sapiens (Human).